The following is a 419-amino-acid chain: Appendage-associated protein (419 aa).

The signal sequence occupies residues 1 to 39 (MIVTYGTVGCPVSRGGSPGCGRRIAEELRLAEDARLRLA). The stretch at 232–262 (ERQKAQRRREERAAKAREELRKELNDIDAKW) forms a coiled coil.

The protein localises to the secreted. Functionally, associates with actin filament appendages that are formed in the inclusion appendages of the parasitophorous vacuole during infection of the host erythrocyte. The polypeptide is Appendage-associated protein (Anaplasma marginale (strain St. Maries)).